The primary structure comprises 312 residues: DNA-directed RNA polymerase subunit alpha (312 aa).

The tract at residues 1-229 is alpha N-terminal domain (alpha-NTD); it reads MLQYQIDRIE…ELFQPLATVT (229 aa). Positions 236–312 are alpha C-terminal domain (alpha-CTD); it reads IEPEPSAEAQ…ISIPQSRTSV (77 aa).

This sequence belongs to the RNA polymerase alpha chain family. As to quaternary structure, in cyanobacteria the RNAP catalytic core is composed of 2 alpha, 1 beta, 1 beta', 1 gamma and 1 omega subunit. When a sigma factor is associated with the core the holoenzyme is formed, which can initiate transcription.

It catalyses the reaction RNA(n) + a ribonucleoside 5'-triphosphate = RNA(n+1) + diphosphate. Its function is as follows. DNA-dependent RNA polymerase catalyzes the transcription of DNA into RNA using the four ribonucleoside triphosphates as substrates. The protein is DNA-directed RNA polymerase subunit alpha of Synechococcus sp. (strain CC9311).